We begin with the raw amino-acid sequence, 486 residues long: UDP-N-acetylmuramate--L-alanine ligase (486 aa).

ATP is bound at residue 126–132; it reads GTHGKTS.

Belongs to the MurCDEF family.

The protein localises to the cytoplasm. It catalyses the reaction UDP-N-acetyl-alpha-D-muramate + L-alanine + ATP = UDP-N-acetyl-alpha-D-muramoyl-L-alanine + ADP + phosphate + H(+). Its pathway is cell wall biogenesis; peptidoglycan biosynthesis. In terms of biological role, cell wall formation. The sequence is that of UDP-N-acetylmuramate--L-alanine ligase from Corynebacterium glutamicum (strain R).